The chain runs to 553 residues: Putative transport protein YidE (553 aa).

The next 5 helical transmembrane spans lie at 4–24 (IALT…IGNI), 28–48 (GVGF…HFVD), 65–85 (FGLI…FFAS), 95–115 (LFAV…HKIF), and 158–178 (MSYA…MWLM). 2 RCK C-terminal domains span residues 192–276 (KHES…VIGK) and 279–361 (DTSL…VVGN). A run of 5 helical transmembrane segments spans residues 371-391 (MLPV…PLFV), 403-425 (AGGP…LYWF), 437-457 (LGIV…FVNT), 464-484 (LSWI…VGLL), and 533-553 (LVMF…WGIG).

This sequence belongs to the AAE transporter (TC 2.A.81) family. YidE subfamily.

It localises to the cell membrane. This chain is Putative transport protein YidE, found in Salmonella arizonae (strain ATCC BAA-731 / CDC346-86 / RSK2980).